The chain runs to 323 residues: Tetraacyldisaccharide 4'-kinase (323 aa).

56–63 (TVGGVGKT) provides a ligand contact to ATP.

The protein belongs to the LpxK family.

It catalyses the reaction a lipid A disaccharide + ATP = a lipid IVA + ADP + H(+). It functions in the pathway glycolipid biosynthesis; lipid IV(A) biosynthesis; lipid IV(A) from (3R)-3-hydroxytetradecanoyl-[acyl-carrier-protein] and UDP-N-acetyl-alpha-D-glucosamine: step 6/6. In terms of biological role, transfers the gamma-phosphate of ATP to the 4'-position of a tetraacyldisaccharide 1-phosphate intermediate (termed DS-1-P) to form tetraacyldisaccharide 1,4'-bis-phosphate (lipid IVA). This chain is Tetraacyldisaccharide 4'-kinase, found in Legionella pneumophila (strain Corby).